The following is a 297-amino-acid chain: Glycerol-3-phosphate dehydrogenase [NAD(P)+] (297 aa).

NADPH-binding residues include Trp-11, Arg-33, and Lys-79. The sn-glycerol 3-phosphate site is built by Lys-79, Gly-107, and Ser-109. NADPH is bound at residue Ala-111. Sn-glycerol 3-phosphate contacts are provided by Lys-161, Asp-214, Ser-224, Arg-225, and Asn-226. The active-site Proton acceptor is Lys-161. Residue Arg-225 coordinates NADPH. Positions 249 and 251 each coordinate NADPH.

Belongs to the NAD-dependent glycerol-3-phosphate dehydrogenase family.

The protein localises to the cytoplasm. It catalyses the reaction sn-glycerol 3-phosphate + NAD(+) = dihydroxyacetone phosphate + NADH + H(+). It carries out the reaction sn-glycerol 3-phosphate + NADP(+) = dihydroxyacetone phosphate + NADPH + H(+). Its pathway is membrane lipid metabolism; glycerophospholipid metabolism. Its function is as follows. Catalyzes the reduction of the glycolytic intermediate dihydroxyacetone phosphate (DHAP) to sn-glycerol 3-phosphate (G3P), the key precursor for phospholipid synthesis. This chain is Glycerol-3-phosphate dehydrogenase [NAD(P)+], found in Campylobacter jejuni subsp. jejuni serotype O:23/36 (strain 81-176).